We begin with the raw amino-acid sequence, 404 residues long: CCA-adding enzyme (404 aa).

The ATP site is built by glycine 27 and arginine 30. Positions 27 and 30 each coordinate CTP. Residues aspartate 40 and aspartate 42 each contribute to the Mg(2+) site. Residues arginine 111, aspartate 154, arginine 157, arginine 160, and arginine 163 each coordinate ATP. 5 residues coordinate CTP: arginine 111, aspartate 154, arginine 157, arginine 160, and arginine 163.

It belongs to the tRNA nucleotidyltransferase/poly(A) polymerase family. Bacterial CCA-adding enzyme type 3 subfamily. Homodimer. Mg(2+) serves as cofactor.

The catalysed reaction is a tRNA precursor + 2 CTP + ATP = a tRNA with a 3' CCA end + 3 diphosphate. The enzyme catalyses a tRNA with a 3' CCA end + 2 CTP + ATP = a tRNA with a 3' CCACCA end + 3 diphosphate. Its function is as follows. Catalyzes the addition and repair of the essential 3'-terminal CCA sequence in tRNAs without using a nucleic acid template. Adds these three nucleotides in the order of C, C, and A to the tRNA nucleotide-73, using CTP and ATP as substrates and producing inorganic pyrophosphate. tRNA 3'-terminal CCA addition is required both for tRNA processing and repair. Also involved in tRNA surveillance by mediating tandem CCA addition to generate a CCACCA at the 3' terminus of unstable tRNAs. While stable tRNAs receive only 3'-terminal CCA, unstable tRNAs are marked with CCACCA and rapidly degraded. The structural flexibility of RNA controls the choice between CCA versus CCACCA addition: following the first CCA addition cycle, nucleotide-binding to the active site triggers a clockwise screw motion, producing torque on the RNA. This ejects stable RNAs, whereas unstable RNAs are refolded while bound to the enzyme and subjected to a second CCA catalytic cycle. The chain is CCA-adding enzyme from Geobacillus stearothermophilus (Bacillus stearothermophilus).